We begin with the raw amino-acid sequence, 150 residues long: MGLEKSFILFSLLVLVLGWVQPSLGRKPSVQDFKRQHMDPGSSPNSRPTYCNQMMKRRGMTKGSCKRVNTFLHESWAKVQAICSQRQMTRKTSSKKNCHKSSSPLHITECRLKGSSKYPKCDYTTTNSQKHIIIACEGNPLVPVHLDARV.

The signal sequence occupies residues 1–25; it reads MGLEKSFILFSLLVLVLGWVQPSLG. Arg35 lines the substrate pocket. His37 serves as the catalytic Proton acceptor. 3 cysteine pairs are disulfide-bonded: Cys51–Cys110, Cys65–Cys121, and Cys83–Cys136. Residues 66 to 70, Lys91, and Arg111 each bind substrate; that span reads KRVNT. The active-site Proton donor is His145.

It belongs to the pancreatic ribonuclease family. Monomer.

Its subcellular location is the secreted. The catalysed reaction is an [RNA] containing cytidine + H2O = an [RNA]-3'-cytidine-3'-phosphate + a 5'-hydroxy-ribonucleotide-3'-[RNA].. It catalyses the reaction an [RNA] containing uridine + H2O = an [RNA]-3'-uridine-3'-phosphate + a 5'-hydroxy-ribonucleotide-3'-[RNA].. Endonuclease that catalyzes the cleavage of RNA on the 3' side of pyrimidine nucleotides. Acts on single-stranded and double-stranded RNA. The sequence is that of Ribonuclease pancreatic delta-type from Rattus rattus (Black rat).